A 569-amino-acid chain; its full sequence is Proline--tRNA ligase (569 aa).

Belongs to the class-II aminoacyl-tRNA synthetase family. ProS type 1 subfamily. In terms of assembly, homodimer.

Its subcellular location is the cytoplasm. The enzyme catalyses tRNA(Pro) + L-proline + ATP = L-prolyl-tRNA(Pro) + AMP + diphosphate. Catalyzes the attachment of proline to tRNA(Pro) in a two-step reaction: proline is first activated by ATP to form Pro-AMP and then transferred to the acceptor end of tRNA(Pro). As ProRS can inadvertently accommodate and process non-cognate amino acids such as alanine and cysteine, to avoid such errors it has two additional distinct editing activities against alanine. One activity is designated as 'pretransfer' editing and involves the tRNA(Pro)-independent hydrolysis of activated Ala-AMP. The other activity is designated 'posttransfer' editing and involves deacylation of mischarged Ala-tRNA(Pro). The misacylated Cys-tRNA(Pro) is not edited by ProRS. This is Proline--tRNA ligase from Dehalococcoides mccartyi (strain ATCC BAA-2266 / KCTC 15142 / 195) (Dehalococcoides ethenogenes (strain 195)).